We begin with the raw amino-acid sequence, 199 residues long: Ribosome maturation factor RimM (199 aa).

One can recognise a PRC barrel domain in the interval 95 to 168 (EDEFYHADLV…FVRVDPVAAG (74 aa)). The interval 167–199 (AGLVEDEDGDAPREEDFDPKGRPRGPRDAGGNR) is disordered. Basic and acidic residues predominate over residues 176-193 (DAPREEDFDPKGRPRGPR).

It belongs to the RimM family. Binds ribosomal protein uS19.

It is found in the cytoplasm. Its function is as follows. An accessory protein needed during the final step in the assembly of 30S ribosomal subunit, possibly for assembly of the head region. Essential for efficient processing of 16S rRNA. May be needed both before and after RbfA during the maturation of 16S rRNA. It has affinity for free ribosomal 30S subunits but not for 70S ribosomes. The chain is Ribosome maturation factor RimM from Mesorhizobium japonicum (strain LMG 29417 / CECT 9101 / MAFF 303099) (Mesorhizobium loti (strain MAFF 303099)).